We begin with the raw amino-acid sequence, 166 residues long: Protein-export protein SecB (166 aa).

The protein belongs to the SecB family. Homotetramer, a dimer of dimers. One homotetramer interacts with 1 SecA dimer.

The protein localises to the cytoplasm. One of the proteins required for the normal export of preproteins out of the cell cytoplasm. It is a molecular chaperone that binds to a subset of precursor proteins, maintaining them in a translocation-competent state. It also specifically binds to its receptor SecA. The polypeptide is Protein-export protein SecB (Roseobacter denitrificans (strain ATCC 33942 / OCh 114) (Erythrobacter sp. (strain OCh 114))).